Reading from the N-terminus, the 557-residue chain is Dihydroxy-acid dehydratase (557 aa).

A [2Fe-2S] cluster-binding site is contributed by Cys-50. Asp-82 contributes to the Mg(2+) binding site. Cys-123 contacts [2Fe-2S] cluster. Positions 124 and 125 each coordinate Mg(2+). Lys-125 bears the N6-carboxylysine mark. [2Fe-2S] cluster is bound at residue Cys-195. Glu-447 is a Mg(2+) binding site. Ser-473 (proton acceptor) is an active-site residue.

This sequence belongs to the IlvD/Edd family. As to quaternary structure, homodimer. It depends on [2Fe-2S] cluster as a cofactor. Mg(2+) is required as a cofactor.

It carries out the reaction (2R)-2,3-dihydroxy-3-methylbutanoate = 3-methyl-2-oxobutanoate + H2O. The catalysed reaction is (2R,3R)-2,3-dihydroxy-3-methylpentanoate = (S)-3-methyl-2-oxopentanoate + H2O. Its pathway is amino-acid biosynthesis; L-isoleucine biosynthesis; L-isoleucine from 2-oxobutanoate: step 3/4. The protein operates within amino-acid biosynthesis; L-valine biosynthesis; L-valine from pyruvate: step 3/4. In terms of biological role, functions in the biosynthesis of branched-chain amino acids. Catalyzes the dehydration of (2R,3R)-2,3-dihydroxy-3-methylpentanoate (2,3-dihydroxy-3-methylvalerate) into 2-oxo-3-methylpentanoate (2-oxo-3-methylvalerate) and of (2R)-2,3-dihydroxy-3-methylbutanoate (2,3-dihydroxyisovalerate) into 2-oxo-3-methylbutanoate (2-oxoisovalerate), the penultimate precursor to L-isoleucine and L-valine, respectively. The sequence is that of Dihydroxy-acid dehydratase from Janthinobacterium sp. (strain Marseille) (Minibacterium massiliensis).